The primary structure comprises 1159 residues: Caspase recruitment domain-containing protein 11 (1159 aa).

Residues 18–110 (EEEALWDNVE…ELYKLVTGKE (93 aa)) form the CARD domain. Positions 111-128 (PTRRFSTIVVEEGHEGLT) are linker. Residues 176–449 (FQERYYKMKE…KDNGSLDQSL (274 aa)) are a coiled coil. The interval 441–496 (DNGSLDQSLPRHLPATIISQNLGDTSPRTNGQEADDSSTSEESPEDSKYFLPYHPP) is disordered. 2 positions are modified to phosphoserine: Ser448 and Ser466. Positions 450–671 (PRHLPATIIS…GHVRGTGPLV (222 aa)) are inhibitory domain (ID). Residues 457–472 (IISQNLGDTSPRTNGQ) are compositionally biased toward polar residues. Residues 473-484 (EADDSSTSEESP) are compositionally biased toward acidic residues. Phosphoserine occurs at positions 512 and 540. The disordered stretch occupies residues 532-578 (HEEDFTDGSPSSSRSLPVTSSFSKMQPHRSRSSIMSITAEPPGNDSI). Residues 540–554 (SPSSSRSLPVTSSFS) are compositionally biased toward low complexity. Position 564 is a phosphoserine; by PKC/PRKCB and PKC/PRKCQ (Ser564). Ser598 carries the post-translational modification Phosphoserine. The interval 610–631 (NHERYSFGPPSIHSSSSSHQSE) is disordered. Residues 620–630 (SIHSSSSSHQS) are compositionally biased toward low complexity. Phosphoserine; by PKC/PRKCB and PKC/PRKCQ is present on residues Ser649 and Ser657. The region spanning 672–760 (QHTTLNGDGL…LITLHYKVNH (89 aa)) is the PDZ domain. Ser891 and Ser930 each carry phosphoserine. Residues 978 to 1145 (RRRPVLFTPT…LLRVLKDKIV (168 aa)) enclose the Guanylate kinase-like domain.

As to quaternary structure, homodimer; disulfide-linked. Homomultimer; polymerizes following activation, forming a nucleating helical template that seeds BCL10-filament formation via a CARD-CARD interaction. Interacts (via CARD domain) with BCL10 (via CARD domain); interaction takes place following CARD11 activation and polymerization, leading to the formation of a filamentous CBM complex assembly. Component of a CBM complex (CARD11-BCL10-MALT1) complex involved in NF-kappa-B activation. Found in a membrane raft complex, at least composed of BCL10, CARD11, DPP4 and IKBKB. Interacts (via PDZ domain) with DPP4 (via cytoplasmic tail). Post-translationally, phosphorylation at Ser-564, Ser-649 and Ser-657 by PRKCB and PRKCQ leads to a shift from an inactive to an active form that activates the NF-kappa-B signaling.

It is found in the cytoplasm. It localises to the membrane raft. With respect to regulation, maintained in an autoinhibited state via homodimerization in which the CARD domain forms an extensive interaction with the adjacent linker and coiled-coil regions. Activation downstream of T-cell receptor (TCR) by phosphorylation by PRKCB and PRKCQ triggers CARD11 homooligomerization and BCL10 recruitment, followed by activation of NF-kappa-B. Adapter protein that plays a key role in adaptive immune response by transducing the activation of NF-kappa-B downstream of T-cell receptor (TCR) and B-cell receptor (BCR) engagement. Transduces signals downstream TCR or BCR activation via the formation of a multiprotein complex together with BCL10 and MALT1 that induces NF-kappa-B and MAP kinase p38 (MAPK11, MAPK12, MAPK13 and/or MAPK14) pathways. Upon activation in response to TCR or BCR triggering, CARD11 homooligomerizes to form a nucleating helical template that recruits BCL10 via CARD-CARD interaction, thereby promoting polymerization of BCL10 and subsequent recruitment of MALT1: this leads to I-kappa-B kinase (IKK) phosphorylation and degradation, and release of NF-kappa-B proteins for nuclear translocation. Its binding to DPP4 induces T-cell proliferation and NF-kappa-B activation in a T-cell receptor/CD3-dependent manner. Promotes linear ubiquitination of BCL10 by promoting the targeting of BCL10 to RNF31/HOIP. Stimulates the phosphorylation of BCL10. Also activates the TORC1 signaling pathway. The polypeptide is Caspase recruitment domain-containing protein 11 (Mus musculus (Mouse)).